A 450-amino-acid chain; its full sequence is Chromosomal replication initiator protein DnaA (450 aa).

Residues 1–79 are domain I, interacts with DnaA modulators; sequence MENIHDLWNR…TGEELLIKFI (79 aa). A domain II region spans residues 79–111; it reads ITPPNQSEDDFEFQRSSKKHRKPYEESTDFPQS. The tract at residues 112 to 328 is domain III, AAA+ region; sequence MLNPKYTFDT…GALIRVVAYS (217 aa). ATP-binding residues include Gly-156, Gly-158, Lys-159, and Thr-160. The segment at 329–450 is domain IV, binds dsDNA; the sequence is SLINKEITAD…KEIEEKLKQL (122 aa).

This sequence belongs to the DnaA family. Oligomerizes as a right-handed, spiral filament on DNA at oriC.

The protein localises to the cytoplasm. In terms of biological role, plays an essential role in the initiation and regulation of chromosomal replication. ATP-DnaA binds to the origin of replication (oriC) to initiate formation of the DNA replication initiation complex once per cell cycle. Binds the DnaA box (a 9 base pair repeat at the origin) and separates the double-stranded (ds)DNA. Forms a right-handed helical filament on oriC DNA; dsDNA binds to the exterior of the filament while single-stranded (ss)DNA is stabiized in the filament's interior. The ATP-DnaA-oriC complex binds and stabilizes one strand of the AT-rich DNA unwinding element (DUE), permitting loading of DNA polymerase. After initiation quickly degrades to an ADP-DnaA complex that is not apt for DNA replication. Binds acidic phospholipids. The sequence is that of Chromosomal replication initiator protein DnaA from Geobacillus sp. (strain WCH70).